The following is a 130-amino-acid chain: Small ribosomal subunit protein uS8A (130 aa).

The protein belongs to the universal ribosomal protein uS8 family. As to quaternary structure, component of the small ribosomal subunit (SSU). Mature yeast ribosomes consist of a small (40S) and a large (60S) subunit. The 40S small subunit contains 1 molecule of ribosomal RNA (18S rRNA) and 33 different proteins (encoded by 57 genes). The large 60S subunit contains 3 rRNA molecules (25S, 5.8S and 5S rRNA) and 46 different proteins (encoded by 81 genes).

It localises to the cytoplasm. Functionally, component of the ribosome, a large ribonucleoprotein complex responsible for the synthesis of proteins in the cell. The small ribosomal subunit (SSU) binds messenger RNAs (mRNAs) and translates the encoded message by selecting cognate aminoacyl-transfer RNA (tRNA) molecules. The large subunit (LSU) contains the ribosomal catalytic site termed the peptidyl transferase center (PTC), which catalyzes the formation of peptide bonds, thereby polymerizing the amino acids delivered by tRNAs into a polypeptide chain. The nascent polypeptides leave the ribosome through a tunnel in the LSU and interact with protein factors that function in enzymatic processing, targeting, and the membrane insertion of nascent chains at the exit of the ribosomal tunnel. This chain is Small ribosomal subunit protein uS8A, found in Saccharomyces cerevisiae (strain ATCC 204508 / S288c) (Baker's yeast).